A 72-amino-acid polypeptide reads, in one-letter code: Large ribosomal subunit protein uL29 (72 aa).

The protein belongs to the universal ribosomal protein uL29 family.

This chain is Large ribosomal subunit protein uL29, found in Chlamydia felis (strain Fe/C-56) (Chlamydophila felis).